The following is a 396-amino-acid chain: Putative pyridoxal phosphate-dependent acyltransferase (396 aa).

111–112 serves as a coordination point for pyridoxal 5'-phosphate; it reads GF. His136 is a binding site for substrate. Pyridoxal 5'-phosphate contacts are provided by residues Ser186, 211 to 214, and 241 to 244; these read DDAH and TLSK. An N6-(pyridoxal phosphate)lysine modification is found at Lys244. Substrate is bound at residue Thr358.

Belongs to the class-II pyridoxal-phosphate-dependent aminotransferase family. Homodimer. Pyridoxal 5'-phosphate is required as a cofactor.

The chain is Putative pyridoxal phosphate-dependent acyltransferase from Bacillus cereus (strain ATCC 14579 / DSM 31 / CCUG 7414 / JCM 2152 / NBRC 15305 / NCIMB 9373 / NCTC 2599 / NRRL B-3711).